Reading from the N-terminus, the 427-residue chain is Galactose-3-O-sulfotransferase 3 (427 aa).

The Cytoplasmic portion of the chain corresponds to 1–19 (MPPIFQRLQQATKMSRRKI). A helical; Signal-anchor for type II membrane protein transmembrane segment spans residues 20-40 (LLLVLGCSTLSLLIHQGAQLS). Residues 41–427 (WYPKLFPLSC…RPIRALRPGH (387 aa)) lie on the Lumenal side of the membrane. 4 N-linked (GlcNAc...) asparagine glycosylation sites follow: Asn90, Asn109, Asn176, and Asn301. The interval 404–427 (MRLRPEPVLDNPPPRPIRALRPGH) is disordered.

It belongs to the galactose-3-O-sulfotransferase family. Requires Mg(2+) as cofactor.

Its subcellular location is the golgi apparatus. It localises to the golgi stack membrane. It functions in the pathway protein modification; carbohydrate sulfation. Transfers a sulfate to position 3 of non-reducing beta-galactosyl residues in N-glycans and core2-branched O-glycans. Has high activity towards Gal-beta-1,4-GlcNAc, Gal-beta-1,4(Fuc-alpha-1,3)GlcNAc and lower activity towards Gal-beta-1,3(Fuc-alpha-1,4)GlcNAc. This Bos taurus (Bovine) protein is Galactose-3-O-sulfotransferase 3 (GAL3ST3).